We begin with the raw amino-acid sequence, 187 residues long: PBAN-type neuropeptides (187 aa).

Residues 1 to 22 (MSRFYFFFNLICLYLAIKSALS) form the signal peptide. Positions 23–64 (AELDTNDQKYADLRTTGRGESPDSTGPDSDTLRRDDGAEGLN) are excised as a propeptide. Over residues 34-43 (DLRTTGRGES) the composition is skewed to basic and acidic residues. The interval 34–58 (DLRTTGRGESPDSTGPDSDTLRRDD) is disordered. At leucine 76 the chain carries Leucine amide. The propeptide occupies 80 to 127 (TIAADLHDDLVEEFDAEPLGYAGEPPQKLATELVQGAPYMVLLVTAKP). Positions 132–163 (PIFYHTTSPRLGRRDSVGENHQRPPFAPRLGR) are disordered. Leucine 142 carries the leucine amide modification. Over residues 143–153 (GRRDSVGENHQ) the composition is skewed to basic and acidic residues. 2 positions are modified to leucine amide: leucine 161 and leucine 171. Positions 174-187 (SYNGGYPLPFQFAY) are excised as a propeptide.

This sequence belongs to the pyrokinin family.

Its subcellular location is the secreted. Functionally, a hormone that controls sex pheromone production in females and pheromone responsiveness in male. Also mediates visceral muscle contractile activity (myotropic activity). This chain is PBAN-type neuropeptides, found in Anopheles gambiae (African malaria mosquito).